The following is a 189-amino-acid chain: GTPase NRas (189 aa).

Residues 10–18 (GAGGVGKSA) and 29–30 (VD) contribute to the GTP site. Residues 32-40 (YDPTIEDSY) carry the Effector region motif. A (Microbial infection) O-linked (Glc) threonine; by P.sordellii toxin TcsL glycan is attached at Thr35. 57–61 (DTAGQ) contacts GTP. At Ser89 the chain carries Phosphoserine. Residue 116-119 (NKCD) participates in GTP binding. Residues 166 to 185 (YRMKKLNSSDDGTQGCMGLP) form a hypervariable region region. Lys170 participates in a covalent cross-link: Glycyl lysine isopeptide (Lys-Gly) (interchain with G-Cter in ubiquitin). A lipid anchor (S-palmitoyl cysteine) is attached at Cys181. Cys186 is lipidated: S-farnesyl cysteine. Residues 187–189 (VVM) constitute a propeptide, removed in mature form.

It belongs to the small GTPase superfamily. Ras family. As to quaternary structure, interacts (active GTP-bound form preferentially) with RGS14. Interacts (active GTP-bound form) with RASSF7. Interacts (active GTP-bound form) with both SHOC2 and PP1c (all isoforms) to form a tertiary complex; SHOC2 and PP1c preferably bind M-Ras/MRAS, but they also bind K-Ras/KRAS, N-Ras/NRAS and H-Ras/HRAS. In terms of processing, palmitoylated by the ZDHHC9-GOLGA7 complex. Depalmitoylated by ABHD17A, ABHD17B and ABHD17C. A continuous cycle of de- and re-palmitoylation regulates rapid exchange between plasma membrane and Golgi. Acetylation at Lys-104 prevents interaction with guanine nucleotide exchange factors (GEFs). Post-translationally, fatty-acylated at Lys-169 and/or Lys-170. In terms of processing, ubiquitinated by the BCR(LZTR1) E3 ubiquitin ligase complex at Lys-170 in a non-degradative manner, leading to inhibit Ras signaling by decreasing Ras association with membranes. Phosphorylation at Ser-89 enhances NRAS association with its downstream effectors. Post-translationally, (Microbial infection) Glucosylated at Thr-35 by P.sordellii toxin TcsL.

The protein resides in the cell membrane. It localises to the golgi apparatus membrane. It carries out the reaction GTP + H2O = GDP + phosphate + H(+). Alternates between an inactive form bound to GDP and an active form bound to GTP. Activated by a guanine nucleotide-exchange factor (GEF) and inactivated by a GTPase-activating protein (GAP). Its function is as follows. Ras proteins bind GDP/GTP and possess intrinsic GTPase activity. The protein is GTPase NRas (NRAS) of Homo sapiens (Human).